A 198-amino-acid polypeptide reads, in one-letter code: Nucleoside triphosphate pyrophosphatase (198 aa).

Aspartate 72 (proton acceptor) is an active-site residue.

It belongs to the Maf family. A divalent metal cation serves as cofactor.

It localises to the cytoplasm. The catalysed reaction is a ribonucleoside 5'-triphosphate + H2O = a ribonucleoside 5'-phosphate + diphosphate + H(+). It carries out the reaction a 2'-deoxyribonucleoside 5'-triphosphate + H2O = a 2'-deoxyribonucleoside 5'-phosphate + diphosphate + H(+). In terms of biological role, nucleoside triphosphate pyrophosphatase. May have a dual role in cell division arrest and in preventing the incorporation of modified nucleotides into cellular nucleic acids. This is Nucleoside triphosphate pyrophosphatase from Acinetobacter baylyi (strain ATCC 33305 / BD413 / ADP1).